A 634-amino-acid chain; its full sequence is Proline and serine-rich protein 3 (634 aa).

Disordered regions lie at residues 1-69 (MFPK…LIDN), 81-142 (FRQA…TSLA), 185-242 (DASS…ATLK), 368-455 (VPPT…FEGP), and 472-534 (FPDS…TAPK). Polar residues predominate over residues 15-24 (RTGATRSQRP). Composition is skewed to low complexity over residues 40 to 56 (ESWP…STTE), 128 to 140 (VTGP…SSTS), and 185 to 202 (DASS…SPSS). Over residues 203–215 (VTFNPDSNKSSNP) the composition is skewed to polar residues. Residues 368-377 (VPPTSTSTTP) show a composition bias toward low complexity. A compositionally biased stretch (pro residues) spans 378-399 (APTPTPQVCIPGPPTSAPPPCA). Residues 436-448 (VSTSSHQKTTVPD) show a composition bias toward polar residues. Residues 503-515 (PESRRGSKTESRK) are compositionally biased toward basic and acidic residues. Position 588 is a phosphoserine (serine 588).

Its subcellular location is the cytoplasm. The protein localises to the cytoskeleton. The protein resides in the microtubule organizing center. It localises to the centrosome. The protein is Proline and serine-rich protein 3 (Proser3) of Mus musculus (Mouse).